The sequence spans 344 residues: Glyceraldehyde-3-phosphate dehydrogenase (344 aa).

NAD(+)-binding positions include 11 to 12 (TI) and G110. Position 139–141 (139–141 (SCN)) interacts with D-glyceraldehyde 3-phosphate. The active-site Nucleophile is C140. Residue R169 coordinates NAD(+). 195–196 (HG) contributes to the D-glyceraldehyde 3-phosphate binding site. Q302 is a binding site for NAD(+).

This sequence belongs to the glyceraldehyde-3-phosphate dehydrogenase family. Homotetramer.

The protein localises to the cytoplasm. The catalysed reaction is D-glyceraldehyde 3-phosphate + phosphate + NADP(+) = (2R)-3-phospho-glyceroyl phosphate + NADPH + H(+). It catalyses the reaction D-glyceraldehyde 3-phosphate + phosphate + NAD(+) = (2R)-3-phospho-glyceroyl phosphate + NADH + H(+). The protein operates within carbohydrate degradation; glycolysis; pyruvate from D-glyceraldehyde 3-phosphate: step 1/5. This is Glyceraldehyde-3-phosphate dehydrogenase from Pyrobaculum neutrophilum (strain DSM 2338 / JCM 9278 / NBRC 100436 / V24Sta) (Thermoproteus neutrophilus).